Here is a 293-residue protein sequence, read N- to C-terminus: 4-diphosphocytidyl-2-C-methyl-D-erythritol kinase (293 aa).

The active site involves lysine 23. ATP is bound at residue 109 to 119 (PVAAGIGGGSA). The active site involves aspartate 151.

It belongs to the GHMP kinase family. IspE subfamily.

It carries out the reaction 4-CDP-2-C-methyl-D-erythritol + ATP = 4-CDP-2-C-methyl-D-erythritol 2-phosphate + ADP + H(+). It functions in the pathway isoprenoid biosynthesis; isopentenyl diphosphate biosynthesis via DXP pathway; isopentenyl diphosphate from 1-deoxy-D-xylulose 5-phosphate: step 3/6. Its function is as follows. Catalyzes the phosphorylation of the position 2 hydroxy group of 4-diphosphocytidyl-2C-methyl-D-erythritol. The sequence is that of 4-diphosphocytidyl-2-C-methyl-D-erythritol kinase from Rhizorhabdus wittichii (strain DSM 6014 / CCUG 31198 / JCM 15750 / NBRC 105917 / EY 4224 / RW1) (Sphingomonas wittichii).